The primary structure comprises 533 residues: Putative adhesin domain-containing protein LiaX (533 aa).

Residues 1–277 form a binds the antibiotic daptomycin (DAP) and the antimicrobial peptide human LL-37, under physiologically relevant concentrations. Protects the OG1RF and S613 strains from LL-37-mediated killing in a concentration-dependent manner region; the sequence is MKERERVLEL…EFNYPNPQAS (277 aa). Residues 63–89 are disordered; it reads NALEKGESEGPTVDSFEENTQDSAEKD. Residues 83–186 adopt a coiled-coil conformation; it reads QDSAEKDREN…EEELKNIRKE (104 aa). The segment at 279–526 is putative adhesin region; it reads IDVKVANGTV…INASTTTGSI (248 aa). The involved in cell membrane remodeling stretch occupies residues 289 to 526; it reads VFKTWDQEDV…INASTTTGSI (238 aa).

Post-translationally, may undergo proteolytic cleavage, allowing release of the N-terminal region into the extracellular environment.

The protein resides in the secreted. It is found in the cell wall. Its subcellular location is the cell membrane. Involved in cell membrane remodeling, perhaps acting by negative modulation of the liaFSR and liaXYZ gene clusters, thereby regulating content and localization of anionic phospholipids. Binds to the antibiotic daptomycin (DAP) and to cationic antimicrobial peptides, such as human LL-37, perhaps functioning as a sensor that activates the cell envelope stress response. In Enterococcus faecalis (strain ATCC 700802 / V583), this protein is Putative adhesin domain-containing protein LiaX.